The chain runs to 428 residues: NADP-specific glutamate dehydrogenase (428 aa).

Lys68 and Lys92 together coordinate substrate. The active-site Proton donor is the Lys104. Thr188 and Asn219 together coordinate NADP(+). Ser356 contributes to the substrate binding site.

This sequence belongs to the Glu/Leu/Phe/Val dehydrogenases family. As to quaternary structure, homohexamer.

It carries out the reaction L-glutamate + NADP(+) + H2O = 2-oxoglutarate + NH4(+) + NADPH + H(+). Its function is as follows. Catalyzes the reversible oxidative deamination of glutamate to alpha-ketoglutarate and ammonia. The sequence is that of NADP-specific glutamate dehydrogenase (gdhA) from Synechocystis sp. (strain ATCC 27184 / PCC 6803 / Kazusa).